A 78-amino-acid polypeptide reads, in one-letter code: MANIKSAIKRAELNVKHNEKNSAQKSAMRTAIKAFEANPSEELFRAASSAIDKAETKGLIHKNKASRDKARLSAKLAK.

This sequence belongs to the bacterial ribosomal protein bS20 family.

Functionally, binds directly to 16S ribosomal RNA. This is Small ribosomal subunit protein bS20 from Streptococcus sanguinis (strain SK36).